The primary structure comprises 266 residues: Undecaprenyl-diphosphatase (266 aa).

8 consecutive transmembrane segments (helical) span residues 1-21 (METF…FLPI), 39-59 (QGFS…VIYF), 87-107 (WWII…KDFI), 111-131 (LRNT…LWWA), 149-169 (ALLI…RSGA), 183-203 (AAAK…AILV), 218-238 (ALGI…YYFL), and 246-266 (MTPF…LILW).

Belongs to the UppP family.

The protein localises to the cell inner membrane. The enzyme catalyses di-trans,octa-cis-undecaprenyl diphosphate + H2O = di-trans,octa-cis-undecaprenyl phosphate + phosphate + H(+). Catalyzes the dephosphorylation of undecaprenyl diphosphate (UPP). Confers resistance to bacitracin. The sequence is that of Undecaprenyl-diphosphatase from Shewanella denitrificans (strain OS217 / ATCC BAA-1090 / DSM 15013).